Reading from the N-terminus, the 215-residue chain is Adenylate kinase (215 aa).

10 to 15 contributes to the ATP binding site; sequence GAGKGT. Positions 30–59 are NMP; sequence STGDMFRAAIKDQTPLGQEAKSYMDKGELV. AMP contacts are provided by residues Thr-31, Arg-36, 57–59, 85–88, and Gln-92; these read ELV and GFPR. Positions 126-163 are LID; that stretch reads GRRICPTCGATYHVIYNPPKVEGVCDIDGSALVQREDD. Arg-127 is a binding site for ATP. 2 residues coordinate Zn(2+): Cys-130 and Cys-133. ATP is bound at residue 136-137; the sequence is TY. Zn(2+) is bound by residues Cys-150 and Asp-153. Positions 160 and 171 each coordinate AMP. Arg-199 contacts ATP.

This sequence belongs to the adenylate kinase family. As to quaternary structure, monomer.

The protein resides in the cytoplasm. The enzyme catalyses AMP + ATP = 2 ADP. It functions in the pathway purine metabolism; AMP biosynthesis via salvage pathway; AMP from ADP: step 1/1. In terms of biological role, catalyzes the reversible transfer of the terminal phosphate group between ATP and AMP. Plays an important role in cellular energy homeostasis and in adenine nucleotide metabolism. The chain is Adenylate kinase from Exiguobacterium sibiricum (strain DSM 17290 / CCUG 55495 / CIP 109462 / JCM 13490 / 255-15).